A 795-amino-acid polypeptide reads, in one-letter code: Lon protease (795 aa).

Positions 7–213 constitute a Lon N-terminal domain; it reads PQILVVRNQV…KIIGSGIEDL (207 aa). ATP is bound at residue 379 to 386; the sequence is GPPGVGKS. Residues 615–795 form the Lon proteolytic domain; sequence DALPGIVNGM…YKDIYNKIFN (181 aa). Active-site residues include S702 and K745.

It belongs to the peptidase S16 family. In terms of assembly, homohexamer. Organized in a ring with a central cavity.

The protein resides in the cytoplasm. The catalysed reaction is Hydrolysis of proteins in presence of ATP.. Its function is as follows. ATP-dependent serine protease that mediates the selective degradation of mutant and abnormal proteins as well as certain short-lived regulatory proteins. Required for cellular homeostasis and for survival from DNA damage and developmental changes induced by stress. Degrades polypeptides processively to yield small peptide fragments that are 5 to 10 amino acids long. Binds to DNA in a double-stranded, site-specific manner. In Mycoplasma pneumoniae (strain ATCC 29342 / M129 / Subtype 1) (Mycoplasmoides pneumoniae), this protein is Lon protease.